Consider the following 850-residue polypeptide: AdoMet-dependent rRNA methyltransferase SPB1 (850 aa).

Residues Gly58, Trp60, Asp78, Asp94, and Asp119 each coordinate S-adenosyl-L-methionine. The active-site Proton acceptor is Lys159. Polar residues predominate over residues 273–282; that stretch reads GETNEMTWTP. Disordered stretches follow at residues 273–305, 388–414, 529–569, and 620–646; these read GETNEMTWTPRSIKEGEVDEEEEKEKDKEARDE, IDKELSELGEREKARKKRERRRRNEMK, GISD…RTLN, and AKKNGLEYSDSEDEEDDIVMETQKQDD. A compositionally biased stretch (basic and acidic residues) spans 388–400; that stretch reads IDKELSELGEREK. Residues 397–425 are a coiled coil; it reads EREKARKKRERRRRNEMKQREIQRMQMNM. Over residues 401–411 the composition is skewed to basic residues; it reads ARKKRERRRRN. Composition is skewed to acidic residues over residues 537–561 and 628–638; these read DESDGEMSADDVDMATIDDGEDEDD and SDSEDEEDDIV. The stretch at 746-773 forms a coiled coil; the sequence is LEAKGRKKMRALRRLEQMKKKSELINED. The disordered stretch occupies residues 811-850; that stretch reads KNKGIAGRPRGVTGKYKMVDGTMKKEQRAIRRIKKKMGKK. Over residues 840–850 the composition is skewed to basic residues; it reads IRRIKKKMGKK.

This sequence belongs to the class I-like SAM-binding methyltransferase superfamily. RNA methyltransferase RlmE family. SPB1 subfamily. As to quaternary structure, component of the nucleolar and nucleoplasmic pre-60S ribosomal particle.

It localises to the nucleus. It is found in the nucleolus. The catalysed reaction is a ribonucleotide in rRNA + S-adenosyl-L-methionine = a 2'-O-methylribonucleotide in rRNA + S-adenosyl-L-homocysteine + H(+). In terms of biological role, required for proper assembly of pre-ribosomal particles during the biogenesis of the 60S ribosomal subunit. The sequence is that of AdoMet-dependent rRNA methyltransferase SPB1 from Yarrowia lipolytica (strain CLIB 122 / E 150) (Yeast).